Consider the following 205-residue polypeptide: Peptidyl-tRNA hydrolase (205 aa).

Tyrosine 18 provides a ligand contact to tRNA. Residue histidine 23 is the Proton acceptor of the active site. The tRNA site is built by tyrosine 69, asparagine 71, and asparagine 117.

This sequence belongs to the PTH family. Monomer.

It localises to the cytoplasm. It catalyses the reaction an N-acyl-L-alpha-aminoacyl-tRNA + H2O = an N-acyl-L-amino acid + a tRNA + H(+). Hydrolyzes ribosome-free peptidyl-tRNAs (with 1 or more amino acids incorporated), which drop off the ribosome during protein synthesis, or as a result of ribosome stalling. In terms of biological role, catalyzes the release of premature peptidyl moieties from peptidyl-tRNA molecules trapped in stalled 50S ribosomal subunits, and thus maintains levels of free tRNAs and 50S ribosomes. The chain is Peptidyl-tRNA hydrolase from Synechococcus sp. (strain CC9605).